We begin with the raw amino-acid sequence, 324 residues long: Mating-type protein A-3 (324 aa).

The HMG box DNA-binding region spans 147-215; the sequence is TSRPRNQFVL…RHRAENPHLY (69 aa).

It localises to the nucleus. In terms of biological role, required, together with mating-type protein A-2, for efficient ascospore formation. This Neurospora crassa (strain ATCC 24698 / 74-OR23-1A / CBS 708.71 / DSM 1257 / FGSC 987) protein is Mating-type protein A-3 (mtA-3).